Reading from the N-terminus, the 180-residue chain is Large ribosomal subunit protein uL6 (180 aa).

Belongs to the universal ribosomal protein uL6 family. As to quaternary structure, part of the 50S ribosomal subunit.

In terms of biological role, this protein binds to the 23S rRNA, and is important in its secondary structure. It is located near the subunit interface in the base of the L7/L12 stalk, and near the tRNA binding site of the peptidyltransferase center. The protein is Large ribosomal subunit protein uL6 of Lachnoclostridium phytofermentans (strain ATCC 700394 / DSM 18823 / ISDg) (Clostridium phytofermentans).